The following is a 752-amino-acid chain: Double zinc ribbon and ankyrin repeat-containing protein 1 (752 aa).

S160 and S182 each carry phosphoserine. Residues 164–187 (IPAYGGGSGSRPPTRQSQSPGFAH) form a disordered region. Residues 174 to 183 (RPPTRQSQSP) are compositionally biased toward polar residues. 2 consecutive DZANK-type zinc fingers follow at residues 211 to 270 (CAHC…CVVC) and 339 to 387 (CYRC…GSCG). ANK repeat units follow at residues 605–636 (ENRLLLKEVGPTGEGRVSVIEQLLDEGADPNC) and 640–669 (DNRPVITVAVMNKHHEAIPVLVQRGADIDQ).

Interacts with NINL isoform 2. Associates with DYNC1H1 and multiple dynein intermediate and light chains as well as actin-binding proteins.

Its subcellular location is the cytoplasm. The protein localises to the cytoskeleton. The protein resides in the microtubule organizing center. It is found in the centrosome. It localises to the cilium basal body. In terms of biological role, involved in vesicle transport in photoreceptor cells. This is Double zinc ribbon and ankyrin repeat-containing protein 1 from Homo sapiens (Human).